A 142-amino-acid polypeptide reads, in one-letter code: uncharacterized protein (142 aa).

Residues 18-137 (QSRSYSCGPA…RIFTGNVLVV (120 aa)) form the Peptidase C39 domain.

This is an uncharacterized protein from Methanothermobacter thermautotrophicus (strain ATCC 29096 / DSM 1053 / JCM 10044 / NBRC 100330 / Delta H) (Methanobacterium thermoautotrophicum).